A 429-amino-acid polypeptide reads, in one-letter code: Phosphomethylpyrimidine synthase 1 (429 aa).

Substrate-binding positions include Asn65, Met94, Tyr123, His162, 184–186, 225–228, and Glu264; these read SRG and DGLR. His268 provides a ligand contact to Zn(2+). Residue Tyr291 coordinates substrate. Residue His332 coordinates Zn(2+). The [4Fe-4S] cluster site is built by Cys408, Cys411, and Cys415.

The protein belongs to the ThiC family. [4Fe-4S] cluster serves as cofactor.

The enzyme catalyses 5-amino-1-(5-phospho-beta-D-ribosyl)imidazole + S-adenosyl-L-methionine = 4-amino-2-methyl-5-(phosphooxymethyl)pyrimidine + CO + 5'-deoxyadenosine + formate + L-methionine + 3 H(+). Its pathway is cofactor biosynthesis; thiamine diphosphate biosynthesis. Catalyzes the synthesis of the hydroxymethylpyrimidine phosphate (HMP-P) moiety of thiamine from aminoimidazole ribotide (AIR) in a radical S-adenosyl-L-methionine (SAM)-dependent reaction. In Methanosphaera stadtmanae (strain ATCC 43021 / DSM 3091 / JCM 11832 / MCB-3), this protein is Phosphomethylpyrimidine synthase 1.